A 503-amino-acid chain; its full sequence is SusD-like protein P38 (503 aa).

The N-terminal stretch at 1-21 (MKKFKNISITFLILISLGVLN) is a signal peptide.

It belongs to the SusD family.

It localises to the cell outer membrane. Its function is as follows. Polysaccharide-binding protein probably involved in ulvan degradation. Ulvan is the main polysaccharide component of the Ulvales (green seaweed) cell wall. It is composed of disaccharide building blocks comprising 3-sulfated rhamnose (Rha3S) linked to D-glucuronic acid (GlcA), L-iduronic acid (IduA), or D-xylose (Xyl). The SusD-like protein may mediate ulvan oligomer-binding before transport in the periplasm for further degradation. In Formosa agariphila (strain DSM 15362 / KCTC 12365 / LMG 23005 / KMM 3901 / M-2Alg 35-1), this protein is SusD-like protein P38.